Reading from the N-terminus, the 112-residue chain is UstYa family oxidase VicYb (112 aa).

Short sequence motifs (HXXHC) lie at residues 9–13 and 36–40; these read HYLHC and HLDHC.

Belongs to the ustYa family.

It functions in the pathway mycotoxin biosynthesis. Functionally, ustYa family oxidase, part of the gene cluster that mediates the biosynthesis of the secondary metabolite victorin, the molecular basis for Victoria blight of oats. Within the pathway, vicYb catalyzes the oxidative cyclization of the core peptide. The pathway starts with the processing of the precursor vicA1 by several endopeptidases including kexin proteases as well as the cluster-specific S28 family peptidases vicPa and vicPb to produce 7 identical copies of the hexapeptide Gly-Leu-Lys-Leu-Ala-Phe. After being excised from the precursor peptide, the core peptides are cyclized and modified post-translationally by enzymes encoded within the gene cluster. The ustYa family oxidase vicYb is required for the formation of the macrocycle in victorin and the copper amine oxidases (CAOs) vicK1 and vicK2 are responsible for converting victorin to the active form by oxidizing the N-terminal glycyl residue in the peptides to glyoxylate. Relaxed substrate specificity of enzymes in the victorin biosynthetic pathway results in a metabolic grid that produces a set of analogs including victorinines B, C, E or HV-toxin M. This chain is UstYa family oxidase VicYb, found in Bipolaris victoriae (strain FI3) (Victoria blight of oats agent).